The following is a 250-amino-acid chain: MSQAAETLDGWYSLHLFYAVDWASLRIVPKDERDALVTEFQSFLENTATVRSSKSGDQAIYNITGQKADLLLWFLRPEMKSLNHIENEFNKLRIADFLIPTYSYVSVIELSNYLAGKSDEDPYENPHIKARLYPELPHSDYICFYPMNKRRNETYNWYMLTMEERQKLMYDHGMIGRKYAGKIKQFITGSVGFDDFEWGVTLFSDDVLQFKKIVYEMRFDETTARYGEFGSFFVGHIINTNEFDQFFAIS.

Fe-coproporphyrin III contacts are provided by residues Arg131, Tyr145–Lys149, His172, and Gln185. Tyr145 is an active-site residue.

It belongs to the ChdC family. Type 1 subfamily. Requires Fe-coproporphyrin III as cofactor.

It catalyses the reaction Fe-coproporphyrin III + 2 H2O2 + 2 H(+) = heme b + 2 CO2 + 4 H2O. It carries out the reaction Fe-coproporphyrin III + H2O2 + H(+) = harderoheme III + CO2 + 2 H2O. The enzyme catalyses harderoheme III + H2O2 + H(+) = heme b + CO2 + 2 H2O. It functions in the pathway porphyrin-containing compound metabolism; protoheme biosynthesis. Functionally, involved in coproporphyrin-dependent heme b biosynthesis. Catalyzes the decarboxylation of Fe-coproporphyrin III (coproheme) to heme b (protoheme IX), the last step of the pathway. The reaction occurs in a stepwise manner with a three-propionate intermediate. The sequence is that of Coproheme decarboxylase from Staphylococcus aureus (strain USA300 / TCH1516).